The primary structure comprises 154 residues: U1 small nuclear ribonucleoprotein C (154 aa).

Residues 4 to 36 (YYCDYCDTYLTHDSPSVRKTHCTGRKHKDNVKF) form a Matrin-type zinc finger.

It belongs to the U1 small nuclear ribonucleoprotein C family. In terms of assembly, U1 snRNP is composed of the 7 core Sm proteins B/B', D1, D2, D3, E, F and G that assemble in a heptameric protein ring on the Sm site of the small nuclear RNA to form the core snRNP, and at least 3 U1 snRNP-specific proteins U1-70K, U1-A and U1-C. U1-C interacts with U1 snRNA and the 5' splice-site region of the pre-mRNA.

It is found in the nucleus. In terms of biological role, component of the spliceosomal U1 snRNP, which is essential for recognition of the pre-mRNA 5' splice-site and the subsequent assembly of the spliceosome. U1-C is directly involved in initial 5' splice-site recognition for both constitutive and regulated alternative splicing. The interaction with the 5' splice-site seems to precede base-pairing between the pre-mRNA and the U1 snRNA. Stimulates commitment or early (E) complex formation by stabilizing the base pairing of the 5' end of the U1 snRNA and the 5' splice-site region. In Aedes aegypti (Yellowfever mosquito), this protein is U1 small nuclear ribonucleoprotein C.